We begin with the raw amino-acid sequence, 222 residues long: MEFMLDTLNLDEIKKWSEILPLAGVTSNPTIAKREGSINFFERIKDVRELIGSTPSIHVQVISQDFEGILKDAHKIRRQAGDDIFIKVPVTPAGLRAIKALKKEGYHITATAIYTVIQGLLAIEAGADYLAPYYNRMENLNIDSNSVIRQLALAIDRQNSPSKILAASFKNVAQVNNALAAGAHAVTAGADVFESAFAMPSIQKAVDDFSDDWFVIQNSRSI.

Catalysis depends on K87, which acts as the Schiff-base intermediate with substrate.

Belongs to the transaldolase family. Type 3A subfamily.

The protein localises to the cytoplasm. The enzyme catalyses beta-D-fructose 6-phosphate = dihydroxyacetone + D-glyceraldehyde 3-phosphate. Its function is as follows. Catalyzes the reversible formation of fructose 6-phosphate from dihydroxyacetone and D-glyceraldehyde 3-phosphate via an aldolization reaction. This chain is Probable fructose-6-phosphate aldolase, found in Streptococcus pneumoniae (strain ATCC 700669 / Spain 23F-1).